The chain runs to 370 residues: Queuine tRNA-ribosyltransferase (370 aa).

The Proton acceptor role is filled by Asp89. Residues 89–93 (DSGGF), Asp143, Gln185, and Gly212 contribute to the substrate site. Residues 243–249 (GVGKPED) are RNA binding. The active-site Nucleophile is the Asp262. Residues 267-271 (TRNAR) are RNA binding; important for wobble base 34 recognition. Residues Cys300, Cys302, Cys305, and His331 each contribute to the Zn(2+) site.

Belongs to the queuine tRNA-ribosyltransferase family. In terms of assembly, homodimer. Within each dimer, one monomer is responsible for RNA recognition and catalysis, while the other monomer binds to the replacement base PreQ1. Zn(2+) serves as cofactor.

The catalysed reaction is 7-aminomethyl-7-carbaguanine + guanosine(34) in tRNA = 7-aminomethyl-7-carbaguanosine(34) in tRNA + guanine. It participates in tRNA modification; tRNA-queuosine biosynthesis. In terms of biological role, catalyzes the base-exchange of a guanine (G) residue with the queuine precursor 7-aminomethyl-7-deazaguanine (PreQ1) at position 34 (anticodon wobble position) in tRNAs with GU(N) anticodons (tRNA-Asp, -Asn, -His and -Tyr). Catalysis occurs through a double-displacement mechanism. The nucleophile active site attacks the C1' of nucleotide 34 to detach the guanine base from the RNA, forming a covalent enzyme-RNA intermediate. The proton acceptor active site deprotonates the incoming PreQ1, allowing a nucleophilic attack on the C1' of the ribose to form the product. After dissociation, two additional enzymatic reactions on the tRNA convert PreQ1 to queuine (Q), resulting in the hypermodified nucleoside queuosine (7-(((4,5-cis-dihydroxy-2-cyclopenten-1-yl)amino)methyl)-7-deazaguanosine). In Pseudoalteromonas atlantica (strain T6c / ATCC BAA-1087), this protein is Queuine tRNA-ribosyltransferase.